Consider the following 688-residue polypeptide: Hid-1 family protein P19A11.07c (688 aa).

It belongs to the hid-1 family.

It localises to the cytoplasm. The protein localises to the nucleus. The polypeptide is Hid-1 family protein P19A11.07c (Schizosaccharomyces pombe (strain 972 / ATCC 24843) (Fission yeast)).